A 660-amino-acid polypeptide reads, in one-letter code: Bifunctional polymyxin resistance protein ArnA (660 aa).

The segment at 1 to 304 (MKAVVFAYHD…TLGLVEGSRL (304 aa)) is formyltransferase ArnAFT. Residue His-104 is the Proton donor; for formyltransferase activity of the active site. (6R)-10-formyltetrahydrofolate contacts are provided by residues Arg-114 and 136-140 (VAKAD). Residues 314–660 (RRTRVLILGV…RTVDIVEKSS (347 aa)) are dehydrogenase ArnADH. NAD(+) is bound by residues Asp-347 and 368–369 (DI). Residues Ala-393, Tyr-398, and 432–433 (TS) contribute to the UDP-alpha-D-glucuronate site. The Proton acceptor; for decarboxylase activity role is filled by Glu-434. Residues Arg-460, Asn-492, 526-535 (KLIDGGKQKR), and Tyr-613 each bind UDP-alpha-D-glucuronate. Arg-619 acts as the Proton donor; for decarboxylase activity in catalysis.

It in the N-terminal section; belongs to the Fmt family. UDP-L-Ara4N formyltransferase subfamily. In the C-terminal section; belongs to the NAD(P)-dependent epimerase/dehydratase family. UDP-glucuronic acid decarboxylase subfamily. Homohexamer, formed by a dimer of trimers.

The enzyme catalyses UDP-alpha-D-glucuronate + NAD(+) = UDP-beta-L-threo-pentopyranos-4-ulose + CO2 + NADH. It carries out the reaction UDP-4-amino-4-deoxy-beta-L-arabinose + (6R)-10-formyltetrahydrofolate = UDP-4-deoxy-4-formamido-beta-L-arabinose + (6S)-5,6,7,8-tetrahydrofolate + H(+). It functions in the pathway nucleotide-sugar biosynthesis; UDP-4-deoxy-4-formamido-beta-L-arabinose biosynthesis; UDP-4-deoxy-4-formamido-beta-L-arabinose from UDP-alpha-D-glucuronate: step 1/3. Its pathway is nucleotide-sugar biosynthesis; UDP-4-deoxy-4-formamido-beta-L-arabinose biosynthesis; UDP-4-deoxy-4-formamido-beta-L-arabinose from UDP-alpha-D-glucuronate: step 3/3. It participates in bacterial outer membrane biogenesis; lipopolysaccharide biosynthesis. Functionally, bifunctional enzyme that catalyzes the oxidative decarboxylation of UDP-glucuronic acid (UDP-GlcUA) to UDP-4-keto-arabinose (UDP-Ara4O) and the addition of a formyl group to UDP-4-amino-4-deoxy-L-arabinose (UDP-L-Ara4N) to form UDP-L-4-formamido-arabinose (UDP-L-Ara4FN). The modified arabinose is attached to lipid A and is required for resistance to polymyxin and cationic antimicrobial peptides. This is Bifunctional polymyxin resistance protein ArnA from Escherichia fergusonii (strain ATCC 35469 / DSM 13698 / CCUG 18766 / IAM 14443 / JCM 21226 / LMG 7866 / NBRC 102419 / NCTC 12128 / CDC 0568-73).